A 460-amino-acid polypeptide reads, in one-letter code: Cysteine--tRNA ligase (460 aa).

Cys-29 serves as a coordination point for Zn(2+). The 'HIGH' region signature appears at 31–41 (ATPQSSPHIGH). Cys-212, His-237, and Glu-241 together coordinate Zn(2+). The short motif at 268 to 272 (KMSKS) is the 'KMSKS' region element. Lys-271 contacts ATP.

It belongs to the class-I aminoacyl-tRNA synthetase family. Monomer. The cofactor is Zn(2+).

It is found in the cytoplasm. It catalyses the reaction tRNA(Cys) + L-cysteine + ATP = L-cysteinyl-tRNA(Cys) + AMP + diphosphate. The sequence is that of Cysteine--tRNA ligase from Corynebacterium glutamicum (strain ATCC 13032 / DSM 20300 / JCM 1318 / BCRC 11384 / CCUG 27702 / LMG 3730 / NBRC 12168 / NCIMB 10025 / NRRL B-2784 / 534).